We begin with the raw amino-acid sequence, 663 residues long: Probable serine/threonine-protein kinase DDB_G0283301 (663 aa).

The Protein kinase domain maps to 312-586 (IERRNELGRG…EECVERLITL (275 aa)). Residues 318–326 (LGRGGNGTV) and K348 contribute to the ATP site. D440 (proton acceptor) is an active-site residue.

It belongs to the protein kinase superfamily. Ser/Thr protein kinase family.

It catalyses the reaction L-seryl-[protein] + ATP = O-phospho-L-seryl-[protein] + ADP + H(+). The catalysed reaction is L-threonyl-[protein] + ATP = O-phospho-L-threonyl-[protein] + ADP + H(+). The polypeptide is Probable serine/threonine-protein kinase DDB_G0283301 (Dictyostelium discoideum (Social amoeba)).